Reading from the N-terminus, the 435-residue chain is Diguanylate cyclase TpbB (435 aa).

Residues 1-22 (MNRRRRYTGSNPSLRRVLYRAH) lie on the Cytoplasmic side of the membrane. A helical transmembrane segment spans residues 23-43 (LGVALVAVFTAGLAVTLVGLL). Topologically, residues 44 to 154 (TLRAYADPNQ…VKGSGGSLLR (111 aa)) are periplasmic. The helical transmembrane segment at 155-175 (FLLTGFAGMVLCLLLTALGAF) threads the bilayer. The Cytoplasmic segment spans residues 176 to 435 (YLSRRLVRGI…DSATPEAPPK (260 aa)). One can recognise an HAMP domain in the interval 183–236 (RGIVGPLDQLAKVAHTVRRERDFEKRVPEAGIAELSQLGEDFNALLDELESWQA). One can recognise a GGDEF domain in the interval 279 to 415 (EQLAVLFIDS…GSRRLAELND (137 aa)). Mg(2+)-binding residues include Ser-288 and Asp-330. The Proton acceptor role is filled by Asp-330. Residues 414 to 426 (NDPRILQEEKEID) show a composition bias toward basic and acidic residues. Positions 414 to 435 (NDPRILQEEKEIDSATPEAPPK) are disordered.

The cofactor is Mg(2+). Phosphorylated at both Tyr residues and Ser/Thr residues. Dephosphorylated and inactivated by TpbA.

Its subcellular location is the cell inner membrane. The catalysed reaction is 2 GTP = 3',3'-c-di-GMP + 2 diphosphate. Its pathway is purine metabolism; 3',5'-cyclic di-GMP biosynthesis. With respect to regulation, activity is tightly controlled by YfiR, a small periplasmic protein, and the OmpA/Pal-like outer-membrane lipoprotein YfiB. Diguanylate cyclase activity is inhibited by the specific interaction of YfiR with the TpbB periplasmic domain and is activated by YfiB, which releases the YfiR-mediated repression through sequestration of YfiR to the outer membrane. Activity is also controlled by dephosphorylation of the periplasmic domain by the tyrosine phosphatase TpbA. Its function is as follows. Catalyzes the synthesis of cyclic-di-GMP (c-di-GMP) via the condensation of 2 GTP molecules. Important for the regulation of biofilm maintenance when exposed to peroxide. Part of the YfiB-TpbB-YfiR (or yfiBNR) system, encoding a tripartite signaling module that modulates intracellular c-di-GMP levels. The system is a key regulator of the small colony variant (SCV) phenotype, and plays an important role in biofilm formation and in vivo persistence. The c-di-GMP produced by TpbB/YfiN stimulates the production of the Pel and Psl exopolysaccharides, which promotes surface attachment, generates an SCV phenotype and confers resistance against phagocytosis. The polypeptide is Diguanylate cyclase TpbB (Pseudomonas aeruginosa (strain UCBPP-PA14)).